Here is a 663-residue protein sequence, read N- to C-terminus: Telomere length regulator taz1 (663 aa).

Residues 15–72 are disordered; it reads ENEGDQQFDKEVVQNSDSNIETGQISDSLTKAVEERAETESSSNLSNFTTSESESSKP. 2 stretches are compositionally biased toward polar residues: residues 27–43 and 54–67; these read VQNSDSNIETGQISDSL and ESSSNLSNFTTSES. Ser332 carries the phosphoserine modification. Disordered regions lie at residues 389 to 412 and 471 to 554; these read GSTAQSADEASGHESDASEDTFSE and RAKS…PYEG. 2 stretches are compositionally biased toward basic and acidic residues: residues 489 to 498 and 512 to 524; these read KRGDNLRREA and PPVRESDEQESRS. Residues 556–612 enclose the Myb-like domain; the sequence is RTRRKWTDEEENELYEMISQHGCCWSKIIHIQKLENGPLKTFGPTQIKDKARLIKAR.

Interacts with taf1 via the Myb domain, and ccq1.

It is found in the cytoplasm. The protein resides in the nucleus. It localises to the chromosome. Its subcellular location is the telomere. Its function is as follows. Regulates telomere length and function. Required for the repression of telomere-adjacent gene expression and for normal meiosis or sporulation. It may be a negative regulator of the telomere-replicating enzyme, telomerase, or may protect against activation of telomerase-independent pathways of telomere elongation. It may be involved in the interactions between chromosomes and spindle proteins, disruption of these interactions would lead to defective meiosis. The chain is Telomere length regulator taz1 (taz1) from Schizosaccharomyces pombe (strain 972 / ATCC 24843) (Fission yeast).